The chain runs to 833 residues: V-type proton ATPase 116 kDa subunit a 4 (833 aa).

Residues 1–390 (MASVFRSEEM…DAYGVGSYRE (390 aa)) lie on the Cytoplasmic side of the membrane. A helical transmembrane segment spans residues 391–409 (INPAPYTIITFPFLFAVMF). At 410-411 (GD) the chain is on the vacuolar side. A helical membrane pass occupies residues 412-428 (CGHGMVMLMAALWMVLN). Residues 429–443 (ERHLLAQKSTNEMWN) are Cytoplasmic-facing. Residues 444 to 473 (IFFNGRYLILLMGIFSIYTGLIYNDCFSKS) traverse the membrane as a helical segment. Residues 474-538 (FNIFGSSWSV…ASNKLTFLNS (65 aa)) lie on the Vacuolar side of the membrane. Residues 539-558 (YKMKMSVILGIAHMIFGVIL) form a helical membrane-spanning segment. Residues 559–576 (SLFNHIYFRRTLNIILQF) lie on the Cytoplasmic side of the membrane. The helical transmembrane segment at 577-597 (IPEMIFMLSLFGYLVFMIIFK) threads the bilayer. Residues 598–642 (WCRYDAHTSRKAPSILIHFIGMFLFDYDDSSNAPLYGHQQEVQTF) are Vacuolar-facing. Residues 643 to 662 (FVIIALVSVPWMLLIKPFVL) form a helical membrane-spanning segment. The Cytoplasmic segment spans residues 663–720 (RAKHQKSQLQSFTIHEDAVEGDHSGHSSKKTAGAHGMKDGHEEEFNFGDIFVHQAIHT). Positions 681–700 (VEGDHSGHSSKKTAGAHGMK) are disordered. A helical transmembrane segment spans residues 721–745 (IEYCLGCISNTASYLRLWALSLAHA). Over 746–766 (ELSEVLWTMVMSIGLRLQGWA) the chain is Vacuolar. The helical transmembrane segment at 767–805 (GLVGVFIIFAVFAVLTVAILLVMEGLSAFLHALRLHWVE) threads the bilayer. Topologically, residues 806-833 (FQNKFYEGAGSKFSPFSFKHVLEGTAEE) are cytoplasmic.

This sequence belongs to the V-ATPase 116 kDa subunit family. V-ATPase is a heteromultimeric enzyme made up of two complexes: the ATP-hydrolytic V1 complex and the proton translocation V0 complex. The V1 complex consists of three catalytic AB heterodimers that form a heterohexamer, three peripheral stalks each consisting of EG heterodimers, one central rotor including subunits D and F, and the regulatory subunits C and H. The proton translocation complex V0 consists of the proton transport subunit a, a ring of proteolipid subunits c9c'', rotary subunit d, subunits e and f, and the accessory subunits ATP6AP1/Ac45 and ATP6AP2/PRR. Interacts with the V1 complex V-ATPase subunit A ATP6V1A. Interacts with the V0 complex V-ATPase subunit c ATP6V0C. Specifically expressed in kidney, but not in the heart, brain, spleen, lung, liver, muscle, or testis. Distribution within the kidney appears more widespread than that seen in man. High intensity staining at the surface of intercalated cells, with additional expression in the proximal tubule.

It localises to the apical cell membrane. The protein resides in the basolateral cell membrane. Functionally, subunit of the V0 complex of vacuolar(H+)-ATPase (V-ATPase), a multisubunit enzyme composed of a peripheral complex (V1) that hydrolyzes ATP and a membrane integral complex (V0) that translocates protons. V-ATPase is responsible for acidifying and maintaining the pH of intracellular compartments and in some cell types, is targeted to the plasma membrane, where it is responsible for acidifying the extracellular environment. Involved in normal vectorial acid transport into the urine by the kidney. The chain is V-type proton ATPase 116 kDa subunit a 4 (Atp6v0a4) from Mus musculus (Mouse).